The following is a 47-amino-acid chain: DICTNCCAGTKGCNTTSANGAFICEGQSDPKKPKACPLNCDPHIAYA.

3 disulfide bridges follow: Cys3–Cys40, Cys6–Cys24, and Cys7–Cys36.

Functionally, inhibitor of serine proteases chymotrypsin, papain and trypsin. Has strong antifungal activity against C.albicans and R.solani. Has antibacterial activity against the Gram-positive bacterium C.michiganense, but lacks antibacterial activity against the Gram-positive bacterium S.aureus. Lacks hemolytic activity against human erythrocytes. The polypeptide is Potamin-1 (Solanum tuberosum (Potato)).